Consider the following 1368-residue polypeptide: Alpha-latrotoxin-Lg1a (1368 aa).

Residues 217–236 (VLYAILYGTQTYVSVMFFLL) are helix H8 is the probable transmembrane region of the tetrameric pore inserted in the target cell membrane. A disulfide bridge links Cys392 with Cys1044. ANK repeat units lie at residues 469–500 (QGRT…DINQ), 504–533 (KGYT…SVNS), 538–568 (FLQT…NINE), 572–601 (DGFT…DVNV), 605–635 (KGLT…DINA), 639–669 (NNMT…NANA), 674–704 (GLLS…NYNL), 708–737 (GDIT…NINQ), 741–770 (EKYT…NLEA), 774–803 (TGAT…NWRE), 807–837 (NGQM…VLDI), 841–870 (NLDT…KVNT), 874–903 (KGQA…NVYI), 907–936 (DGLN…KFEW), 953–981 (ISHF…GHYS), 982–1011 (ICSP…SVDG), 1013–1042 (KPDT…KVNH), 1046–1075 (NGMT…DFRR), 1079–1109 (LDAT…NINI), and 1115–1144 (NKET…DENI). The furin-like endopeptidase recognition region stretch occupies residues 1174–1177 (KFRR). The propeptide occupies 1178-1368 (EYKSSNGEHD…GETLHLFHES (191 aa)).

Belongs to the cationic peptide 01 (latrotoxin) family. 03 (alpha-latrotoxin) subfamily. Homotetramer in membranes. Expressed in venom gland, cephalothorax, and abdomen tissues from both males and females.

Its subcellular location is the secreted. It localises to the target cell membrane. Presynaptic neurotoxin that causes massive release of neurotransmitters from vertebrate (but not invertebrate) nerve terminals and endocrine cells via a complex mechanism involving activation of receptor(s) and toxin insertion into the plasma membrane with subsequent pore formation. Binds to neurexin-1-alpha (NRXN1) in a calcium dependent manner, adhesion G protein-coupled receptor L1 (ADGRL1, also termed latrophilin-1 and calcium-independent receptor of latrotoxin (CIRL)), and receptor-type tyrosine-protein phosphatase S (PTPRS), also termed PTP sigma. NRXN1 and PTPRS are suggested to provide a platform for binding and subsequent pore formation events. In contrast, binding to ADGRL1 does not involve oligomerization and channel formation, but direct downstream stimulation of the synaptic fusion machinery. In Latrodectus geometricus (Brown widow spider), this protein is Alpha-latrotoxin-Lg1a.